A 161-amino-acid polypeptide reads, in one-letter code: Putative pre-16S rRNA nuclease (161 aa).

This sequence belongs to the YqgF nuclease family.

Its subcellular location is the cytoplasm. In terms of biological role, could be a nuclease involved in processing of the 5'-end of pre-16S rRNA. The polypeptide is Putative pre-16S rRNA nuclease (Rhodospirillum rubrum (strain ATCC 11170 / ATH 1.1.1 / DSM 467 / LMG 4362 / NCIMB 8255 / S1)).